A 324-amino-acid chain; its full sequence is Elongation factor P--(R)-beta-lysine ligase (324 aa).

75-77 lines the substrate pocket; that stretch reads SPE. ATP is bound by residues 99-101 and Asn-108; that span reads RNQ. Tyr-117 provides a ligand contact to substrate. 243 to 244 contacts ATP; the sequence is EL. A substrate-binding site is contributed by Glu-250. Residue Gly-299 coordinates ATP.

Belongs to the class-II aminoacyl-tRNA synthetase family. EpmA subfamily. Homodimer.

It catalyses the reaction D-beta-lysine + L-lysyl-[protein] + ATP = N(6)-((3R)-3,6-diaminohexanoyl)-L-lysyl-[protein] + AMP + diphosphate + H(+). With EpmB is involved in the beta-lysylation step of the post-translational modification of translation elongation factor P (EF-P). Catalyzes the ATP-dependent activation of (R)-beta-lysine produced by EpmB, forming a lysyl-adenylate, from which the beta-lysyl moiety is then transferred to the epsilon-amino group of a conserved specific lysine residue in EF-P. The polypeptide is Elongation factor P--(R)-beta-lysine ligase (Buchnera aphidicola subsp. Schizaphis graminum (strain Sg)).